A 169-amino-acid chain; its full sequence is S-ribosylhomocysteine lyase (169 aa).

Fe cation contacts are provided by His54, His58, and Cys128.

It belongs to the LuxS family. Homodimer. Requires Fe cation as cofactor.

The enzyme catalyses S-(5-deoxy-D-ribos-5-yl)-L-homocysteine = (S)-4,5-dihydroxypentane-2,3-dione + L-homocysteine. Its function is as follows. Involved in the synthesis of autoinducer 2 (AI-2) which is secreted by bacteria and is used to communicate both the cell density and the metabolic potential of the environment. The regulation of gene expression in response to changes in cell density is called quorum sensing. Catalyzes the transformation of S-ribosylhomocysteine (RHC) to homocysteine (HC) and 4,5-dihydroxy-2,3-pentadione (DPD). The polypeptide is S-ribosylhomocysteine lyase (Shewanella baltica (strain OS223)).